The chain runs to 145 residues: EDVPQPPVSQFYIQGQVYCDTCRARFITELSEFIPGAGVRLQCKDGENGKVTFTEVGYTKAEGLYNMLIERDHKNEFCEITLISSSRKDCDEIPTEGWVKPSLKFVLNTVNGTTRTINPLGFLKKEVLPKCPQVFNKLGMYPPNM.

Disulfide bonds link Cys19-Cys90, Cys22-Cys131, and Cys43-Cys78. Asn111 carries N-linked (GlcNAc...) asparagine glycosylation.

The protein belongs to the Ole e I family.

Its subcellular location is the secreted. The polypeptide is Major pollen allergen Lig v 1 (Ligustrum vulgare (Common privet)).